Consider the following 1183-residue polypeptide: Translation initiation factor IF-2 (1183 aa).

2 disordered regions span residues 55-512 (KSKT…KVHI) and 538-574 (ASLA…RQRR). The segment covering 83–99 (TQKDQKTEPKKKNHDQT) has biased composition (basic and acidic residues). Polar residues-rich tracts occupy residues 100–143 (ELSQ…QITA) and 165–177 (KPLT…IPQS). The span at 220–229 (PKIDIQDKKP) shows a compositional bias: basic and acidic residues. Polar residues predominate over residues 231 to 252 (QPNNQKAKTRINQGEISPQKVG). Low complexity predominate over residues 253–267 (QGNIQKIKSQNKQNQ). Basic and acidic residues predominate over residues 288–304 (IRREKPVNKPHTNEVRN). 2 stretches are compositionally biased toward polar residues: residues 324 to 349 (QGLS…NRQG) and 357 to 367 (NRTTQGQNRPG). The segment covering 485-499 (GRPDWDDSAKLDALR) has biased composition (basic and acidic residues). Composition is skewed to basic residues over residues 544–553 (SKPKVGKRNN) and 560–574 (LKKR…RQRR). The 173-residue stretch at 675-847 (RRPPVVTVMG…VLLVTEVEDL (173 aa)) folds into the tr-type G domain. Residues 684–691 (GHVDHGKT) are G1. 684–691 (GHVDHGKT) contributes to the GTP binding site. Positions 709 to 713 (GITQH) are G2. Residues 734-737 (DTPG) are G3. GTP contacts are provided by residues 734-738 (DTPGH) and 788-791 (NKID). The G4 stretch occupies residues 788 to 791 (NKID). The interval 824–826 (SAI) is G5.

Belongs to the TRAFAC class translation factor GTPase superfamily. Classic translation factor GTPase family. IF-2 subfamily.

It localises to the cytoplasm. In terms of biological role, one of the essential components for the initiation of protein synthesis. Protects formylmethionyl-tRNA from spontaneous hydrolysis and promotes its binding to the 30S ribosomal subunits. Also involved in the hydrolysis of GTP during the formation of the 70S ribosomal complex. The sequence is that of Translation initiation factor IF-2 from Prochlorococcus marinus (strain NATL1A).